The primary structure comprises 307 residues: uncharacterized protein (307 aa).

Positions 254-278 (HSRHHRRHHRRHHHHHHQNSSHSDE) are disordered. Basic residues predominate over residues 255–272 (SRHHRRHHRRHHHHHHQN).

To yeast YOR062c.

This is an uncharacterized protein from Saccharomyces cerevisiae (strain ATCC 204508 / S288c) (Baker's yeast).